The sequence spans 234 residues: Ribonuclease HII (234 aa).

The 192-residue stretch at 16 to 207 (ALVAGVDEAG…VRRMLTPKAI (192 aa)) folds into the RNase H type-2 domain. 3 residues coordinate a divalent metal cation: Asp-22, Glu-23, and Asp-115.

It belongs to the RNase HII family. The cofactor is Mn(2+). Mg(2+) serves as cofactor.

It localises to the cytoplasm. It carries out the reaction Endonucleolytic cleavage to 5'-phosphomonoester.. Endonuclease that specifically degrades the RNA of RNA-DNA hybrids. The chain is Ribonuclease HII from Xylella fastidiosa (strain M23).